A 340-amino-acid chain; its full sequence is GTPase Obg (340 aa).

The region spanning 1–161 (MKFVDMTNIT…QHLLLELLLI (161 aa)) is the Obg domain. In terms of domain architecture, OBG-type G spans 162–335 (ANVGIFGLPN…LCNSIMKFIM (174 aa)). GTP contacts are provided by residues 168–175 (GLPNSGKS), 193–197 (FTTLV), 215–218 (DIPG), 285–288 (NKID), and 316–318 (SSI). Positions 175 and 195 each coordinate Mg(2+).

It belongs to the TRAFAC class OBG-HflX-like GTPase superfamily. OBG GTPase family. In terms of assembly, monomer. Mg(2+) serves as cofactor.

The protein resides in the cytoplasm. Functionally, an essential GTPase which binds GTP, GDP and possibly (p)ppGpp with moderate affinity, with high nucleotide exchange rates and a fairly low GTP hydrolysis rate. Plays a role in control of the cell cycle, stress response, ribosome biogenesis and in those bacteria that undergo differentiation, in morphogenesis control. The sequence is that of GTPase Obg from Blochmanniella pennsylvanica (strain BPEN).